The primary structure comprises 372 residues: NAD(P)H-quinone oxidoreductase subunit 1 (372 aa).

8 helical membrane passes run 27–47, 97–117, 128–148, 176–196, 204–224, 270–290, 308–328, and 351–371; these read LLWLPLPMLLVLTAALIGVLV, LLFTLGPVLVLIPVILSWLII, VGIGIFLWIALSSIQPIGLLM, LALAVLAIVMMSNSLSTIDIV, FLSWNIWRQPVGFLIFWICAL, LLVSVLYLGGWGFPIPVELIA, SLGIVMTVFKTYLLVFLAILL, and ISLVNLLFTAALKLVFPFAFG.

The protein belongs to the complex I subunit 1 family. As to quaternary structure, NDH-1 is composed of at least 11 different subunits.

It localises to the cellular thylakoid membrane. It catalyses the reaction a plastoquinone + NADH + (n+1) H(+)(in) = a plastoquinol + NAD(+) + n H(+)(out). It carries out the reaction a plastoquinone + NADPH + (n+1) H(+)(in) = a plastoquinol + NADP(+) + n H(+)(out). NDH-1 shuttles electrons from an unknown electron donor, via FMN and iron-sulfur (Fe-S) centers, to quinones in the respiratory and/or the photosynthetic chain. The immediate electron acceptor for the enzyme in this species is believed to be plastoquinone. Couples the redox reaction to proton translocation, and thus conserves the redox energy in a proton gradient. This Prochlorococcus marinus (strain SARG / CCMP1375 / SS120) protein is NAD(P)H-quinone oxidoreductase subunit 1.